Here is a 58-residue protein sequence, read N- to C-terminus: Dortoxin (58 aa).

Positions 3-58 constitute an LCN-type CS-alpha/beta domain; the sequence is VPGNYPLDKDGNTYTCLKLGENKDCQKVCKLHGVQYGYCYAFECWCKEYLDDKDSV. 3 disulfide bridges follow: C18–C41, C27–C46, and C31–C48.

Expressed by the venom gland.

It is found in the secreted. Binds to sodium channels (Nav) and affects the channel activation process. In mice, causes hyperactivity that persists until death. The sequence is that of Dortoxin from Parabuthus transvaalicus (Transvaal thick-tailed scorpion).